The primary structure comprises 637 residues: Multicopper oxidase LPR1 homolog 5 (637 aa).

An N-terminal signal peptide occupies residues 1–21 (MSPRIQQLAAVLLAAVVVVAA). Asparagine 100 carries N-linked (GlcNAc...) asparagine glycosylation. The Cu cation site is built by histidine 209 and histidine 211. Residue asparagine 234 is glycosylated (N-linked (GlcNAc...) asparagine). Residues histidine 257 and histidine 259 each coordinate Cu cation. N-linked (GlcNAc...) asparagine glycosylation is found at asparagine 308, asparagine 349, asparagine 357, asparagine 425, asparagine 482, and asparagine 516. In terms of domain architecture, Plastocyanin-like spans 334–406 (PYLSVQRRRY…IVDFSRLPAA (73 aa)). Positions 522, 525, and 527 each coordinate Cu cation. The N-linked (GlcNAc...) asparagine glycan is linked to asparagine 553. Histidine 618, cysteine 619, histidine 620, histidine 624, and methionine 629 together coordinate Cu cation.

Belongs to the multicopper oxidase family. Cu cation is required as a cofactor. In terms of tissue distribution, highly expressed in roots and basal stems.

Its subcellular location is the endoplasmic reticulum membrane. In terms of biological role, multicopper oxidase that may play a role in the maintenance of inorganic phosphate homeostasis. This chain is Multicopper oxidase LPR1 homolog 5, found in Oryza sativa subsp. japonica (Rice).